A 560-amino-acid polypeptide reads, in one-letter code: Solute carrier family 22 member 6 (560 aa).

Topologically, residues 1–15 (MAFSDLLEQVGSTGR) are cytoplasmic. Residues 16 to 36 (FQVLHVTLLSMPILMMASHNL) traverse the membrane as a helical segment. At 37–143 (LQNFVAAVPP…LVCDYRALKQ (107 aa)) the chain is on the extracellular side. Residues 144–164 (MSQTTYMGGVLVGAIVFGGLS) form a helical membrane-spanning segment. Residues 165–170 (DRFGRR) are Cytoplasmic-facing. Residues 171–191 (VLLLISNLMMAIGGTCVAFST) traverse the membrane as a helical segment. The Extracellular segment spans residues 192–201 (SFTMFCVFRV). Residues 202–222 (CCGMALSGLVLNSFSLIVEWI) traverse the membrane as a helical segment. Topologically, residues 223–228 (PTRVRT) are cytoplasmic. Residues 229–249 (VVGTGTGYCYTTGQLILAAVA) form a helical membrane-spanning segment. At 250–256 (YCIRDWR) the chain is on the extracellular side. Residues 257–277 (WLTLAVSLPFYVSFLYSWWFL) traverse the membrane as a helical segment. Residues 278–345 (ESARWLVLTK…DLLRTSTMRT (68 aa)) lie on the Cytoplasmic side of the membrane. A helical transmembrane segment spans residues 346–366 (ITICLSAVWFSTSFAYYGLSM). Residues 367-374 (DLQKFGVS) lie on the Extracellular side of the membrane. Residues 375 to 395 (IYLIQIIFGAVDIPAKIIVTI) form a helical membrane-spanning segment. Over 396–406 (CMSMLGRRPSQ) the chain is Cytoplasmic. The chain crosses the membrane as a helical span at residues 407 to 427 (CGALVLAGIMILINLLVPSDL). The Extracellular segment spans residues 428-433 (QMLRTS). The chain crosses the membrane as a helical span at residues 434–454 (LAVIGKGCLAASFNCCYLYAG). At 455–465 (ELYPTVIRQSG) the chain is on the cytoplasmic side. A helical membrane pass occupies residues 466–486 (MGWVSMMARFGAMVAPMVLLL). Topologically, residues 487–491 (GDDYP) are extracellular. A helical membrane pass occupies residues 492–512 (WIPGFIYGGAPIVSGIFAFFL). At 513–560 (PETLSQPLPDTIQDIDDRGLARTNSKRLPEKLDLAMKDPSCVLLKESV) the chain is on the cytoplasmic side.

It belongs to the major facilitator (TC 2.A.1) superfamily. Organic cation transporter (TC 2.A.1.19) family. Glycosylated. Glycosylation is necessary for proper targeting of the transporter to the plasma membrane.

It is found in the cell membrane. The protein resides in the basolateral cell membrane. The protein localises to the basal cell membrane. In terms of biological role, involved in the renal elimination of endogenous and exogenous organic anions. Functions as organic anion exchanger when the uptake of one molecule of organic anion is coupled with an efflux of one molecule of endogenous dicarboxylic acid (glutarate, ketoglutarate, etc). Mediates the sodium-independent uptake of p-aminohippurate (PAH), 2,3-dimercapto-1-propanesulfonic acid (DMPS), cidofovir, adefovir, 9-(2-phosphonylmethoxyethyl) guanine (PMEG), 9-(2-phosphonylmethoxyethyl) diaminopurine (PMEDAP), ochratoxin (OTA), acyclovir (ACV), 3'-azido-3-'deoxythymidine (AZT), cimetidine (CMD), 2,4-dichloro-phenoxyacetate (2,4-D), hippurate (HA), indoleacetate (IA), indoxyl sulfate (IS) and 3-carboxy-4-methyl-5-propyl-2-furanpropionate (CMPF) and edaravone sulfate. PAH uptake is inhibited by p-chloromercuribenzenesulphonate (PCMBS), diethyl pyrocarbonate (DEPC), indomethacin, sulindac, diclofenac, carprofen, okadaic acid, benzothiazolylcysteine (BTC), S-chlorotrifluoroethylcysteine (CTFC), cysteine S-conjugates S-dichlorovinylcysteine (DCVC), furosemide, steviol, phorbol 12-myristate 13-acetate (PMA), calcium ionophore A23187, benzylpenicillin, bumetamide, losartan, probenecid, phenol red, urate, glutarate and alpha-ketoglutarate. This chain is Solute carrier family 22 member 6 (slc22a6), found in Danio rerio (Zebrafish).